Reading from the N-terminus, the 219-residue chain is Putative zinc metalloprotease YwhC (219 aa).

The chain crosses the membrane as a helical span at residues Phe4–Thr24. Position 26 (His26) interacts with Zn(2+). Glu27 is a catalytic residue. His30 is a binding site for Zn(2+). Helical transmembrane passes span Pro52–Ala72, Ile94–Met114, Phe132–Pro152, and Phe180–Leu200.

The protein belongs to the peptidase M50B family. Zn(2+) serves as cofactor.

The protein resides in the cell membrane. This is Putative zinc metalloprotease YwhC (ywhC) from Bacillus subtilis (strain 168).